A 665-amino-acid polypeptide reads, in one-letter code: RNA-directed RNA polymerase (665 aa).

It catalyses the reaction RNA(n) + a ribonucleoside 5'-triphosphate = RNA(n+1) + diphosphate. Its function is as follows. RNA-dependent RNA polymerase which replicates the viral genome. The chain is RNA-directed RNA polymerase from Atkinsonella hypoxylon (AhV).